A 314-amino-acid chain; its full sequence is Leucine-rich repeat-containing protein 52 (314 aa).

The first 23 residues, 1–23 (MSLASGPSSKLLLFSLGMGLVSG), serve as a signal peptide directing secretion. In terms of domain architecture, LRRNT spans 24-53 (SKCPNKCVCQDQEVACIDLHLTEYPADIPL). At 24–244 (SKCPNKCVCQ…MCITHLDQQD (221 aa)) the chain is on the extracellular side. Disulfide bonds link Cys26–Cys32 and Cys30–Cys39. 5 LRR repeats span residues 54–73 (NTRRLYLNNNKITSLPALQL), 78–99 (DLVYLDCQNNRIREVMDYTFIG), 102–123 (RLIYLDLSSNNLTSISPFSFSV), 126–148 (NLVRLNISHNPHLLYLDKYVFAN), and 151–172 (SLRYLDLRNTGLHIIDHNGFHH). Asn112, Asn131, and Asn148 each carry an N-linked (GlcNAc...) asparagine glycan. The 55-residue stretch at 184-238 (NPWICNCSFLDFTIHLLVSHMDHPDAQNATCTEPAELKGWPITKVGNPLQYMCIT) folds into the LRRCT domain. 2 disulfides stabilise this stretch: Cys188-Cys214 and Cys190-Cys236. N-linked (GlcNAc...) asparagine glycosylation is found at Asn189 and Asn211. A helical transmembrane segment spans residues 245 to 265 (YIFLLLIGFCIFAAGTVAAWL). Residues 266 to 314 (TGVCAVLYQNALRTSSGDDTEDETGSRFANQIFRSNTHLGPIRRFPELI) are Cytoplasmic-facing.

As to quaternary structure, interacts with KCNMA1. Interacts with KCNU1; this interaction may be required for LRRC52 stability and changes the channel gating properties. N-glycosylated. In terms of tissue distribution, testis-specific (at protein level). At the mRNA level, also detected in kidney, ventricle, spinal cord and skeletal muscle, although at lower levels compared to testis. Expression in testis at the protein level requires the presence of KCNU1.

Its subcellular location is the cell membrane. Auxiliary protein of the large-conductance, voltage and calcium-activated potassium channel (BK alpha). Modulates gating properties by producing a marked shift in the BK channel's voltage dependence of activation in the hyperpolarizing direction, and in the absence of calcium. KCNU1 channel auxiliary protein. Modulates KCNU1 gating properties, shifting KCNU1 gating to more negative potentials at a given pH. This Mus musculus (Mouse) protein is Leucine-rich repeat-containing protein 52 (Lrrc52).